A 122-amino-acid polypeptide reads, in one-letter code: Fluoride-specific ion channel FluC (122 aa).

4 consecutive transmembrane segments (helical) span residues 1–21 (MIGT…SRML), 34–54 (FPYG…LFFS), 60–80 (GVHI…FTTF), and 100–120 (FLNI…GFLI).

The protein belongs to the fluoride channel Fluc/FEX (TC 1.A.43) family.

The protein localises to the cell inner membrane. The catalysed reaction is fluoride(in) = fluoride(out). Its function is as follows. Fluoride-specific ion channel. Important for reducing fluoride concentration in the cell, thus reducing its toxicity. This Campylobacter lari (strain RM2100 / D67 / ATCC BAA-1060) protein is Fluoride-specific ion channel FluC.